The chain runs to 178 residues: Endoribonuclease YbeY (178 aa).

3 residues coordinate Zn(2+): His-118, His-122, and His-128. Residues 156–178 (YQQDRQDERDRRLLDKSRYFDEP) are disordered. The segment covering 159–178 (DRQDERDRRLLDKSRYFDEP) has biased composition (basic and acidic residues).

This sequence belongs to the endoribonuclease YbeY family. The cofactor is Zn(2+).

It is found in the cytoplasm. Its function is as follows. Single strand-specific metallo-endoribonuclease involved in late-stage 70S ribosome quality control and in maturation of the 3' terminus of the 16S rRNA. This is Endoribonuclease YbeY from Mycobacterium marinum (strain ATCC BAA-535 / M).